Reading from the N-terminus, the 486-residue chain is Serine/threonine-protein kinase 4 (486 aa).

Residues 29-280 (FDVLEKLGEG…AIQLLQHPFV (252 aa)) form the Protein kinase domain. ATP contacts are provided by residues 35-43 (LGEGSYGSV) and K58. D148 functions as the Proton acceptor in the catalytic mechanism. At T182 the chain carries Phosphothreonine; by autocatalysis. Residues 288 to 324 (ILRDLINEAMDIKLKRQEAQQRELDQEDEENSEEDET) adopt a coiled-coil conformation. Residues 305–332 (EAQQRELDQEDEENSEEDETDSGTMVRA) are disordered. The span at 312-325 (DQEDEENSEEDETD) shows a compositional bias: acidic residues. The SARAH domain occupies 432-479 (YEFLKTWSVDELQRRLSALDPMMEQEIEEIRQKYQSKRQPILDAIEAK).

The protein belongs to the protein kinase superfamily. STE Ser/Thr protein kinase family. STE20 subfamily. Homodimer; mediated via the coiled-coil region. The cofactor is Mg(2+). Post-translationally, proteolytically cleaved by caspase-3 during apoptosis at Asp-325 resulting in a 37 kDa form. Proteolytic cleavage results in kinase activation and nuclear translocation of the truncated form (MST1/N).

The protein localises to the cytoplasm. It localises to the nucleus. The enzyme catalyses L-seryl-[protein] + ATP = O-phospho-L-seryl-[protein] + ADP + H(+). It catalyses the reaction L-threonyl-[protein] + ATP = O-phospho-L-threonyl-[protein] + ADP + H(+). With respect to regulation, the C-terminal non-catalytic region inhibits the kinase activity, the enzyme is activated by caspase-cleavage. Homodimerization and autophosphorylation of Thr-182 is also required for full activation. Stress-activated, pro-apoptotic kinase which, following caspase-cleavage, enters the nucleus and induces chromatin condensation followed by internucleosomal DNA fragmentation. Key component of the Hippo signaling pathway which plays a pivotal role in organ size control and tumor suppression by restricting proliferation and promoting apoptosis. The core of this pathway is composed of a kinase cascade wherein STK3/MST2 and STK4/MST1, in complex with its regulatory protein SAV1, phosphorylates and activates LATS1/2 in complex with its regulatory protein MOB1, which in turn phosphorylates and inactivates YAP1 oncoprotein and WWTR1/TAZ. Phosphorylation of YAP1 by LATS2 inhibits its translocation into the nucleus to regulate cellular genes important for cell proliferation, cell death, and cell migration. Phosphorylates 'Ser-14' of histone H2B (H2BS14ph) during apoptosis. Phosphorylates FOXO3 upon oxidative stress, which results in its nuclear translocation and cell death initiation. The sequence is that of Serine/threonine-protein kinase 4 (STK4) from Gallus gallus (Chicken).